Here is a 344-residue protein sequence, read N- to C-terminus: Cell division protein ZipA (344 aa).

At 1–6 (MEDLQL) the chain is on the periplasmic side. A helical membrane pass occupies residues 7 to 27 (VLFVLGAIAIVAVLVHGFWSI). Over 28-344 (RRQQPKSLKD…DYLHRIRANA (317 aa)) the chain is Cytoplasmic. Disordered stretches follow at residues 75 to 94 (VRKA…PYLK) and 108 to 139 (QFKQ…ASRQ).

Belongs to the ZipA family. As to quaternary structure, interacts with FtsZ via their C-terminal domains.

The protein resides in the cell inner membrane. Essential cell division protein that stabilizes the FtsZ protofilaments by cross-linking them and that serves as a cytoplasmic membrane anchor for the Z ring. Also required for the recruitment to the septal ring of downstream cell division proteins. The sequence is that of Cell division protein ZipA from Shewanella oneidensis (strain ATCC 700550 / JCM 31522 / CIP 106686 / LMG 19005 / NCIMB 14063 / MR-1).